The chain runs to 453 residues: Serine incorporator 1 (453 aa).

Residue Gly2 is the site of N-myristoyl glycine attachment. Residues 2–39 (GSVLGLCSMASWIPCLCGSAPCLLCRCCPSGNNSTVTR) lie on the Cytoplasmic side of the membrane. A helical membrane pass occupies residues 40–60 (LIYALFLLVGVCVACVMLIPG). The Lumenal segment spans residues 61–88 (MEEQLNKIPGFCENEKGMVPCNILVGYK). A helical transmembrane segment spans residues 89-109 (AVYRLCFGLAMFYLLLSLLMI). Residues 110–123 (KVKSSSDPRAAIHN) lie on the Cytoplasmic side of the membrane. Residues 124-144 (GFWFFKFAAAIAIIIGAFFIP) form a helical membrane-spanning segment. Residues 145 to 151 (EGTFTTV) are Lumenal-facing. The chain crosses the membrane as a helical span at residues 152-172 (WFYVGMAGAFCFILIQLVLLI). The Cytoplasmic segment spans residues 173–197 (DFAHSWNESWVEKMEEGNSRCWYAA). The helical transmembrane segment at 198–218 (LLSATALNYLLSLVAVVLFFV) threads the bilayer. At 219–231 (YYTHPASCAENKA) the chain is on the lumenal side. A helical transmembrane segment spans residues 232–252 (FISVNMLLCLGASIMSILPKI). Topologically, residues 253–259 (QESQPRS) are cytoplasmic. The helical transmembrane segment at 260–280 (GLLQSSVITVYTMYLTWSAMT) threads the bilayer. Residues 281-309 (NEPETECNPSLLNIIGYNTTSTVSKEGQS) lie on the Lumenal side of the membrane. The helical transmembrane segment at 310 to 330 (VQWWHTQGIIGLILFLLCVFY) threads the bilayer. Over 331–387 (SSIRTSNNSQVNKLTLTSDESTLIEDGGARNDGSLEDGDDVHRAVDNERDGVTYSYS) the chain is Cytoplasmic. Residue Ser351 is modified to Phosphoserine. Thr352 bears the Phosphothreonine mark. The residue at position 364 (Ser364) is a Phosphoserine. Residues 388 to 408 (FFHFMLFLASLYIMMTLTNWY) form a helical membrane-spanning segment. Residues 409–426 (RYEPSREMKSQWTAVWVK) lie on the Lumenal side of the membrane. A helical transmembrane segment spans residues 427–447 (ISSSWIGIVLYVWTLVAPLVL). Over 448–453 (TNRDFD) the chain is Cytoplasmic.

It belongs to the TDE1 family. Interacts with SPTLC1.

It localises to the endoplasmic reticulum membrane. In terms of biological role, enhances the incorporation of serine into phosphatidylserine and sphingolipids. The protein is Serine incorporator 1 (SERINC1) of Bos taurus (Bovine).